The following is a 443-amino-acid chain: 5-methylthioadenosine/S-adenosylhomocysteine deaminase (443 aa).

Zn(2+)-binding residues include H74 and H76. The substrate site is built by E103 and H196. H223 is a binding site for Zn(2+). 2 residues coordinate substrate: E226 and D311. D311 lines the Zn(2+) pocket.

It belongs to the metallo-dependent hydrolases superfamily. MTA/SAH deaminase family. The cofactor is Zn(2+).

The enzyme catalyses S-adenosyl-L-homocysteine + H2O + H(+) = S-inosyl-L-homocysteine + NH4(+). The catalysed reaction is S-methyl-5'-thioadenosine + H2O + H(+) = S-methyl-5'-thioinosine + NH4(+). In terms of biological role, catalyzes the deamination of 5-methylthioadenosine and S-adenosyl-L-homocysteine into 5-methylthioinosine and S-inosyl-L-homocysteine, respectively. Is also able to deaminate adenosine. This Haloquadratum walsbyi (strain DSM 16790 / HBSQ001) protein is 5-methylthioadenosine/S-adenosylhomocysteine deaminase.